Here is a 380-residue protein sequence, read N- to C-terminus: Cytochrome b (380 aa).

4 helical membrane-spanning segments follow: residues Ser-34–Met-54, Trp-78–Ile-99, Trp-114–Leu-134, and Phe-179–Val-199. His-84 and His-98 together coordinate heme b. Residues His-183 and His-197 each contribute to the heme b site. His-202 contributes to the a ubiquinone binding site. The next 4 helical transmembrane spans lie at Thr-227–Phe-247, Leu-289–Asn-309, Leu-321–Ser-341, and Tyr-348–Ile-369.

Belongs to the cytochrome b family. The main subunits of complex b-c1 are: cytochrome b, cytochrome c1 and the Rieske protein. The cofactor is heme b.

It is found in the mitochondrion inner membrane. In terms of biological role, component of the ubiquinol-cytochrome c reductase complex (complex III or cytochrome b-c1 complex) that is part of the mitochondrial respiratory chain. The b-c1 complex mediates electron transfer from ubiquinol to cytochrome c. Contributes to the generation of a proton gradient across the mitochondrial membrane that is then used for ATP synthesis. The sequence is that of Cytochrome b (MT-CYB) from Strongylocentrotus purpuratus (Purple sea urchin).